Here is a 183-residue protein sequence, read N- to C-terminus: Ribosome maturation factor RimP (183 aa).

It belongs to the RimP family.

Its subcellular location is the cytoplasm. Functionally, required for maturation of 30S ribosomal subunits. This is Ribosome maturation factor RimP from Mycobacterium bovis (strain ATCC BAA-935 / AF2122/97).